Consider the following 928-residue polypeptide: cGMP-dependent 3',5'-cyclic phosphodiesterase (928 aa).

S109 bears the Phosphoserine mark. A disordered region spans residues 188–210 (RRPEAVQNTSADPSEDQKDEKGY). GAF domains are found at residues 228-365 (DATS…GTVL) and 397-536 (DVSV…GISI). The 3',5'-cyclic GMP site is built by S419, D434, I453, Y476, and T487. Residues 566–890 (SDDEYTKLLH…EHWTKVSHKF (325 aa)) form the PDEase domain. H644 serves as the catalytic Proton donor. Zn(2+) is bound by residues H648, H684, D685, and D796. Position 685 (D685) interacts with Mg(2+).

Belongs to the cyclic nucleotide phosphodiesterase family. PDE2 subfamily. Homodimer. The cofactor is Zn(2+). It depends on Mg(2+) as a cofactor. In terms of tissue distribution, expressed in brain and liver.

It localises to the cell membrane. The protein localises to the cytoplasm. Its subcellular location is the mitochondrion matrix. The protein resides in the mitochondrion inner membrane. It is found in the mitochondrion outer membrane. It catalyses the reaction a nucleoside 3',5'-cyclic phosphate + H2O = a nucleoside 5'-phosphate + H(+). It carries out the reaction 3',5'-cyclic GMP + H2O = GMP + H(+). The enzyme catalyses 3',5'-cyclic AMP + H2O = AMP + H(+). The 3',5'-cyclic-AMP phosphodiesterase activity is stimulated by 3',5'-cyclic GMP. Specifically inhibited by Bay 60-7550. When repressed, protected from ionomycin- but not staurosporin-induced cell death. Its function is as follows. cGMP-activated cyclic nucleotide phosphodiesterase with a dual-specificity for the second messengers cAMP and cGMP, which are key regulators of many important physiological processes. Has a higher efficiency with cGMP compared to cAMP. Plays a role in cell growth and migration. Regulates mitochondrial cAMP levels and respiration. Involved in the regulation of mitochondria morphology/dynamics and apoptotic cell death via local modulation of cAMP/PKA signaling in the mitochondrion, including the monitoring of local cAMP levels at the outer mitochondrial membrane and of PKA-dependent phosphorylation of Dnm1l. In Rattus norvegicus (Rat), this protein is cGMP-dependent 3',5'-cyclic phosphodiesterase.